The sequence spans 511 residues: IWS1-like protein (511 aa).

The tract at residues methionine 1–arginine 200 is disordered. 2 stretches are compositionally biased toward low complexity: residues alanine 11–proline 30 and alanine 55–lysine 86. Acidic residues predominate over residues aspartate 94–glutamate 103. Positions histidine 134–threonine 143 are enriched in basic and acidic residues. The span at leucine 166–glutamine 179 shows a compositional bias: acidic residues. Positions serine 294–leucine 374 constitute a TFIIS N-terminal domain. The interval serine 382–lysine 454 is disordered. Basic and acidic residues-rich tracts occupy residues arginine 383–proline 395 and aspartate 414–aspartate 425.

This sequence belongs to the IWS1 family.

Its subcellular location is the nucleus. This is IWS1-like protein from Caenorhabditis elegans.